A 194-amino-acid chain; its full sequence is Thymidine kinase (194 aa).

ATP is bound by residues Gly15 to Ser22 and Asp88 to Gln91. The Proton acceptor role is filled by Glu89. Residues Cys145, Cys148, Cys183, and His186 each contribute to the Zn(2+) site.

It belongs to the thymidine kinase family. As to quaternary structure, homotetramer.

Its subcellular location is the cytoplasm. The catalysed reaction is thymidine + ATP = dTMP + ADP + H(+). The protein is Thymidine kinase of Bacillus licheniformis (strain ATCC 14580 / DSM 13 / JCM 2505 / CCUG 7422 / NBRC 12200 / NCIMB 9375 / NCTC 10341 / NRRL NRS-1264 / Gibson 46).